Reading from the N-terminus, the 187-residue chain is Elongation factor P (187 aa).

At lysine 34 the chain carries N6-(3,6-diaminohexanoyl)-5-hydroxylysine.

The protein belongs to the elongation factor P family. Post-translationally, may be beta-lysylated on the epsilon-amino group of Lys-34 by the combined action of EpmA and EpmB, and then hydroxylated on the C5 position of the same residue by EpmC (if this protein is present). Lysylation is critical for the stimulatory effect of EF-P on peptide-bond formation. The lysylation moiety may extend toward the peptidyltransferase center and stabilize the terminal 3-CCA end of the tRNA. Hydroxylation of the C5 position on Lys-34 may allow additional potential stabilizing hydrogen-bond interactions with the P-tRNA.

Its subcellular location is the cytoplasm. The protein operates within protein biosynthesis; polypeptide chain elongation. In terms of biological role, involved in peptide bond synthesis. Alleviates ribosome stalling that occurs when 3 or more consecutive Pro residues or the sequence PPG is present in a protein, possibly by augmenting the peptidyl transferase activity of the ribosome. Modification of Lys-34 is required for alleviation. The polypeptide is Elongation factor P (Vesicomyosocius okutanii subsp. Calyptogena okutanii (strain HA)).